Here is a 629-residue protein sequence, read N- to C-terminus: tRNA uridine 5-carboxymethylaminomethyl modification enzyme MnmG (629 aa).

FAD is bound by residues Gly13–Gly18, Val125, and Ser180. Gly273–Phe287 contributes to the NAD(+) binding site. Residue Gln370 participates in FAD binding.

The protein belongs to the MnmG family. As to quaternary structure, homodimer. Heterotetramer of two MnmE and two MnmG subunits. FAD is required as a cofactor.

Its subcellular location is the cytoplasm. NAD-binding protein involved in the addition of a carboxymethylaminomethyl (cmnm) group at the wobble position (U34) of certain tRNAs, forming tRNA-cmnm(5)s(2)U34. The sequence is that of tRNA uridine 5-carboxymethylaminomethyl modification enzyme MnmG from Escherichia coli O157:H7.